A 28-amino-acid chain; its full sequence is uORF1 protein (28 aa).

The protein localises to the host cytoplasm. It localises to the host cytoskeleton. Its function is as follows. Plays a role in the reorganization of host microtubules and intermediate filaments to form a cytoskeletal cage that surrounds the viral factories, protecting the site of viral replication. May play a role in viral infection of human cortical neurons. The sequence is that of uORF1 protein from Zika virus (isolate ZIKV/Human/French Polynesia/10087PF/2013) (ZIKV).